The primary structure comprises 1399 residues: FYVE, RhoGEF and PH domain-containing protein 6 (1399 aa).

Disordered regions lie at residues 1–99, 138–164, 185–210, 235–281, 299–341, and 367–479; these read MTSA…KDVR, MKEN…SEKC, LTQQ…NGDH, AHHN…DGIS, YTSK…NGSS, and PVDE…KKPQ. Positions 50 to 60 are enriched in low complexity; the sequence is PAIAPKPKVPT. The span at 259-276 shows a compositional bias: basic and acidic residues; sequence AESRGHTDSCEPENKRVA. Positions 307–321 are enriched in basic residues; sequence KPRKTHAAARLRRQK. 2 stretches are compositionally biased toward polar residues: residues 332–341 and 377–402; these read EPGNSNNGSS and RALT…QQTP. The segment covering 403 to 418 has biased composition (low complexity); sequence SLDTDSSLTSDSSGSG. Residues 428-453 show a composition bias toward polar residues; sequence TYTQCSTQPLSLPKQVTSACTDQPPA. Phosphoserine is present on residues Ser494, Ser531, and Ser583. Residues 515–542 form a disordered region; the sequence is RNYLHHPGPPNHGASASPFDMPNPTSEK. Disordered regions lie at residues 631 to 650 and 657 to 678; these read QHGD…GLES and TGEE…SLES. Residues Ser670 and Ser697 each carry the phosphoserine modification. The segment at 768 to 840 is disordered; it reads APDGQLQLDP…KQDEDAGMKS (73 aa). Residues 802–817 are compositionally biased toward acidic residues; it reads PSDEEVINSSDEDDVS. The span at 821-838 shows a compositional bias: basic and acidic residues; sequence SKGEPDPLEDKQDEDAGM. The DH domain maps to 841-1030; that stretch reads KVHHIAKEIM…IEVANHANDT (190 aa). Residues 1059–1153 enclose the PH 1 domain; that stretch reads VFLKEGTLMK…WLEAISSSIE (95 aa). Phosphoserine is present on Ser1167. An FYVE-type zinc finger spans residues 1191–1250; it reads DTRATMCMICTSEFTLTWRRHHCRACGKIVCQACSSNKYGLDYLKGQLARVCEHCFQELQ. Zn(2+) contacts are provided by Cys1197, Cys1200, Cys1213, Cys1216, Cys1221, Cys1224, Cys1242, and Cys1245. The PH 2 domain maps to 1302 to 1398; sequence DSTMSGYLYR…WIDAFQEGTV (97 aa).

Its subcellular location is the cytoplasm. The protein localises to the cytoskeleton. May activate CDC42, a member of the Ras-like family of Rho- and Rac proteins, by exchanging bound GDP for free GTP. May play a role in regulating the actin cytoskeleton and cell shape. This chain is FYVE, RhoGEF and PH domain-containing protein 6 (Fgd6), found in Mus musculus (Mouse).